The primary structure comprises 254 residues: MILNKALMLGALALTTVMSPCGGEDIVADHVASYGVNLYQSYGPSGQYTHEFDGDEQFYVDLGRKETVWCLPVLRQFRFDPQFALTNIAVLKHNLNSLIKRSNSTAATNEVPEVTVFSKSPVTLGQPNILICLVDNIFPPVVNITWLSNGHSVTEGVSETSFLSKSDHSFFKISYLTLLPSAEESYDCKVEHWGLDKPLLKHWEPEIPAPMSELTETVVCALGLSVGLVGIVVGTVFIIRGLRSVGASRHQGPL.

Residues 1–23 (MILNKALMLGALALTTVMSPCGG) form the signal peptide. The tract at residues 24 to 119 (EDIVADHVAS…EVPEVTVFSK (96 aa)) is alpha-1. The Extracellular segment spans residues 24-216 (EDIVADHVAS…IPAPMSELTE (193 aa)). 2 N-linked (GlcNAc...) asparagine glycosylation sites follow: Asn-103 and Asn-143. Positions 112–204 (PEVTVFSKSP…LDKPLLKHWE (93 aa)) constitute an Ig-like C1-type domain. The tract at residues 120–203 (SPVTLGQPNI…GLDKPLLKHW (84 aa)) is alpha-2. Cys-132 and Cys-188 form a disulfide bridge. The connecting peptide stretch occupies residues 204–216 (EPEIPAPMSELTE). A helical transmembrane segment spans residues 217-239 (TVVCALGLSVGLVGIVVGTVFII). Topologically, residues 240–254 (RGLRSVGASRHQGPL) are cytoplasmic.

The protein belongs to the MHC class II family. In terms of assembly, heterodimer of an alpha and a beta subunit; also referred as MHC class II molecule. In the endoplasmic reticulum (ER) it forms a heterononamer; 3 MHC class II molecules bind to a CD74 homotrimer (also known as invariant chain or HLA class II histocompatibility antigen gamma chain). In the endosomal/lysosomal system; CD74 undergoes sequential degradation by various proteases; leaving a small fragment termed CLIP on each MHC class II molecule. MHC class II molecule interacts with HLA_DM, and HLA_DO in B-cells, in order to release CLIP and facilitate the binding of antigenic peptides.

It localises to the cell membrane. It is found in the endoplasmic reticulum membrane. The protein resides in the golgi apparatus. Its subcellular location is the trans-Golgi network membrane. The protein localises to the endosome membrane. It localises to the lysosome membrane. In terms of biological role, binds peptides derived from antigens that access the endocytic route of antigen presenting cells (APC) and presents them on the cell surface for recognition by the CD4 T-cells. The peptide binding cleft accommodates peptides of 10-30 residues. The peptides presented by MHC class II molecules are generated mostly by degradation of proteins that access the endocytic route, where they are processed by lysosomal proteases and other hydrolases. Exogenous antigens that have been endocytosed by the APC are thus readily available for presentation via MHC II molecules, and for this reason this antigen presentation pathway is usually referred to as exogenous. As membrane proteins on their way to degradation in lysosomes as part of their normal turn-over are also contained in the endosomal/lysosomal compartments, exogenous antigens must compete with those derived from endogenous components. Autophagy is also a source of endogenous peptides, autophagosomes constitutively fuse with MHC class II loading compartments. In addition to APCs, other cells of the gastrointestinal tract, such as epithelial cells, express MHC class II molecules and CD74 and act as APCs, which is an unusual trait of the GI tract. To produce a MHC class II molecule that presents an antigen, three MHC class II molecules (heterodimers of an alpha and a beta chain) associate with a CD74 trimer in the ER to form a heterononamer. Soon after the entry of this complex into the endosomal/lysosomal system where antigen processing occurs, CD74 undergoes a sequential degradation by various proteases, including CTSS and CTSL, leaving a small fragment termed CLIP (class-II-associated invariant chain peptide). The removal of CLIP is facilitated by HLA-DM via direct binding to the alpha-beta-CLIP complex so that CLIP is released. HLA-DM stabilizes MHC class II molecules until primary high affinity antigenic peptides are bound. The MHC II molecule bound to a peptide is then transported to the cell membrane surface. In B-cells, the interaction between HLA-DM and MHC class II molecules is regulated by HLA-DO. Primary dendritic cells (DCs) also to express HLA-DO. Lysosomal microenvironment has been implicated in the regulation of antigen loading into MHC II molecules, increased acidification produces increased proteolysis and efficient peptide loading. The chain is HLA class II histocompatibility antigen, DQ alpha 1 chain (HLA-DQA1) from Homo sapiens (Human).